A 436-amino-acid chain; its full sequence is 3-ketoacyl-CoA thiolase (436 aa).

Cys99 serves as the catalytic Acyl-thioester intermediate. Catalysis depends on proton acceptor residues His392 and Cys422.

Belongs to the thiolase-like superfamily. Thiolase family. Heterotetramer of two alpha chains (FadJ) and two beta chains (FadI).

The protein localises to the cytoplasm. It catalyses the reaction an acyl-CoA + acetyl-CoA = a 3-oxoacyl-CoA + CoA. It functions in the pathway lipid metabolism; fatty acid beta-oxidation. Its function is as follows. Catalyzes the final step of fatty acid oxidation in which acetyl-CoA is released and the CoA ester of a fatty acid two carbons shorter is formed. The sequence is that of 3-ketoacyl-CoA thiolase from Photorhabdus laumondii subsp. laumondii (strain DSM 15139 / CIP 105565 / TT01) (Photorhabdus luminescens subsp. laumondii).